The chain runs to 1021 residues: Transmembrane protein 132A (1021 aa).

A signal peptide spans 1-32 (MTERAAAAPRGPYGAWLCLLVALALEVVRVGS). The Extracellular portion of the chain corresponds to 33–848 (NQNTLDPIYL…VTDLELGMYA (816 aa)). A disordered region spans residues 207–226 (PAGEGPGGCGPGTEEEPKEQ). N-linked (GlcNAc...) asparagine glycosylation occurs at Asn-276. The tract at residues 606 to 913 (IEVRSPLSDS…QLDRCSSSSP (308 aa)) is binds to HSPA5/GRP78. The segment at 666–1021 (LPAPKQEVAL…NYMERIRGSS (356 aa)) is confers cellular localization similar to full-length form. The tract at residues 793–835 (AGDMGSHVGPGIRGKFERAEEEAGKEENEAKEEEEDEEEMVPA) is disordered. The segment covering 806–820 (GKFERAEEEAGKEEN) has biased composition (basic and acidic residues). Over residues 821-832 (EAKEEEEDEEEM) the composition is skewed to acidic residues. The chain crosses the membrane as a helical span at residues 849–869 (LLGIFCLAFLIFLVNGVVFVL). Over 870–1021 (RYQRKEPPDS…NYMERIRGSS (152 aa)) the chain is Cytoplasmic. A disordered region spans residues 903–955 (RQLDRCSSSSPPKGEGGCPCESGAGGDTSTVAPSASESPAGSTSTLARKEAGG). Residues 929–948 (DTSTVAPSASESPAGSTSTL) are compositionally biased toward polar residues.

It belongs to the TMEM132 family. In terms of assembly, interacts with HSPA5/GRP78. In terms of tissue distribution, expressed in the brain in neuronal cells of the hypothalamus, thalamus, cerebral cortex, amygdala, and cerebellum.

It localises to the golgi apparatus membrane. It is found in the endoplasmic reticulum membrane. Its function is as follows. May play a role in embryonic and postnatal development of the brain. Increased resistance to cell death induced by serum starvation in cultured cells. Regulates cAMP-induced GFAP gene expression via STAT3 phosphorylation. The chain is Transmembrane protein 132A (Tmem132a) from Rattus norvegicus (Rat).